The sequence spans 251 residues: Hydroxyacylglutathione hydrolase (251 aa).

The Zn(2+) site is built by His55, His57, Asp59, His60, His112, Asp131, and His169.

It belongs to the metallo-beta-lactamase superfamily. Glyoxalase II family. Monomer. It depends on Zn(2+) as a cofactor.

The catalysed reaction is an S-(2-hydroxyacyl)glutathione + H2O = a 2-hydroxy carboxylate + glutathione + H(+). It participates in secondary metabolite metabolism; methylglyoxal degradation; (R)-lactate from methylglyoxal: step 2/2. Its function is as follows. Thiolesterase that catalyzes the hydrolysis of S-D-lactoyl-glutathione to form glutathione and D-lactic acid. The sequence is that of Hydroxyacylglutathione hydrolase from Erythrobacter litoralis (strain HTCC2594).